The sequence spans 1289 residues: SH3 domain and tetratricopeptide repeat-containing protein 2 (1289 aa).

SH3 domains follow at residues 176 to 239 and 267 to 330; these read EGHF…PLPV and IGRG…LDSC. Positions 393–442 are disordered; it reads SQPEGFREARSGGTWMERQTIGSRRSSGSGDSSPEEDELISASSDSYHLP. Low complexity predominate over residues 414 to 424; that stretch reads GSRRSSGSGDS. TPR repeat units lie at residues 529 to 562, 758 to 791, 837 to 870, 1002 to 1038, 1085 to 1119, 1120 to 1153, 1167 to 1200, and 1211 to 1245; these read ARLC…LDGA, RTLC…GKLL, GVVH…AREM, GQLL…FVDL, LKLY…LARR, MKAL…ATLA, LVAF…CPPW, and AKVY…AVLM.

This Mus musculus (Mouse) protein is SH3 domain and tetratricopeptide repeat-containing protein 2 (Sh3tc2).